The primary structure comprises 216 residues: V-type ATP synthase subunit D (216 aa).

It belongs to the V-ATPase D subunit family.

In terms of biological role, produces ATP from ADP in the presence of a proton gradient across the membrane. The protein is V-type ATP synthase subunit D of Clostridium botulinum (strain Loch Maree / Type A3).